The chain runs to 240 residues: Inhibitor of growth protein 5 (240 aa).

Lys114 is subject to N6-acetyllysine. Residues 116–165 (EGSDFESSGGRGLKKGRGQKEKRGSRGRGRRTSEEDTPKKKKHKGGSEFT) form a disordered region. The residue at position 118 (Ser118) is a Phosphoserine. Arg126 is modified (omega-N-methylarginine). The PHD-type zinc finger occupies 186–235 (PTYCLCHQVSYGEMIGCDNPDCPIEWFHFACVDLTTKPKGKWFCPRCVQE). The Zn(2+) site is built by Cys189, Cys191, Cys202, Cys207, His213, Cys216, Cys229, and Cys232.

The protein belongs to the ING family. As to quaternary structure, component of the HBO1 complex composed of KAT7/HBO1, MEAF6, ING5, and one scaffold subunit: complexes containing BRPF scaffold (BRPF1, BRD1/BRPF2 or BRPF3) direct KAT7/HBO1 specificity towards H3K14ac, while complexes containing JADE scaffold (JADE1, JADE2 and JADE3) mediate acetylation of histone H4. Component of the MOZ/MORF complex composed at least of ING5, KAT6A, KAT6B, MEAF6 and one of BRPF1, BRD1/BRPF2 and BRPF3. Interacts with H3K4me3 and to a lesser extent with H3K4me2. Interacts with EP300 and p53/TP53. Interacts with INCA1. In terms of tissue distribution, down-regulated in bone marrow cells in acute myeloid leukemia patients as compared with normal bone marrow cells.

It is found in the nucleus. The protein localises to the chromosome. Its function is as follows. Component of the HBO1 complex, which specifically mediates acetylation of histone H3 at 'Lys-14' (H3K14ac) and, to a lower extent, acetylation of histone H4. Component of the MOZ/MORF complex which has a histone H3 acetyltransferase activity. Through chromatin acetylation it may regulate DNA replication and may function as a transcriptional coactivator. Inhibits cell growth, induces a delay in S-phase progression and enhances Fas-induced apoptosis in an INCA1-dependent manner. In Homo sapiens (Human), this protein is Inhibitor of growth protein 5 (ING5).